The primary structure comprises 85 residues: MVKIRLTRGGAKKRPFYHIIVTDVRSARDGRNIERLGYYNPVAQGAEPRIVLDVARVDHWVGNGAQLTDKVRNLYREAKSQAAAA.

The protein belongs to the bacterial ribosomal protein bS16 family.

This is Small ribosomal subunit protein bS16 from Xanthomonas euvesicatoria pv. vesicatoria (strain 85-10) (Xanthomonas campestris pv. vesicatoria).